The chain runs to 772 residues: MGCNMCVVQKPEEQYKVMLQVNGKELSKLSQEQTLEALRASKEPLVIQVLRRSPRLRGDSSCHDLQLVDSGTQTDITFEHIMALGKLRPPTPPMGILEPYVLSELPPISHEYYDPAEFMEGGPQEAERMDELEYEEVELCKNSHQDKLGLMVCYRTDEEEDLGIYVGEVNPNSIAAKDGRIREGDRIIQINGMDVQNREEAVAILSQEENTNISLLVARPESQLAKRWKDSDRDDFLDDFGSENEGDLRARKLKSPPVQQIGNDEKGAPDGGPGLNNSQDLDSGVGRTDESTRNEESSEHDLLGDEPPSTTNTPGSLRKFGLQGDALQSRDFHFSMDSLLAEGAGLGGADLPGLTDEEYERYRELLEIKCHLENGNQLGIFFSRASSGNSALDVNRNESLGHEMAMLEEELRHLEFKCRNILRAQKMQQLRERCMKAWLLEEESLYDLAASEPKKHELSDISELPEKSDKDSTSAYNTGESCRSTPLLVEPLPESPLKRSGAGNSNLNRTPSGPPVTTHLKGAPSPGSPAKFRSLSRDPEVGRRQHTEERVRRSTKTSVTLERVGPEGSPYLSRRHRGQEIEQYHSCVQLAPPRTLEDLGHGSLSLASGPRVGGVAAAAVEAPRMEWKVKVRSDGTRYVAKRPVRDRLLKARALKIREERSGMTTDDDAVSEMKMGRYWSKEERKQHLIRAREQRKRREFMMQSRLECLREQQNGDSKPELNIIALSHRKTMKKRNKKILDNWITIQEMLAHGARSADGKRIYNPLLSVTTV.

Residues 136–221 (EVELCKNSHQ…NISLLVARPE (86 aa)) enclose the PDZ domain. The disordered stretch occupies residues 239-320 (DFGSENEGDL…TNTPGSLRKF (82 aa)). The residue at position 242 (Ser242) is a Phosphoserine. The segment covering 287-303 (RTDESTRNEESSEHDLL) has biased composition (basic and acidic residues). Positions 394–424 (VNRNESLGHEMAMLEEELRHLEFKCRNILRA) form a coiled coil. A disordered region spans residues 450 to 573 (ASEPKKHELS…VGPEGSPYLS (124 aa)). Positions 452 to 472 (EPKKHELSDISELPEKSDKDS) are enriched in basic and acidic residues. Ser459 carries the phosphoserine modification. 2 stretches are compositionally biased toward polar residues: residues 473–484 (TSAYNTGESCRS) and 502–511 (AGNSNLNRTP). Positions 535 to 552 (LSRDPEVGRRQHTEERVR) are enriched in basic and acidic residues.

The protein resides in the cytoplasm. It is found in the cell cortex. The chain is PDZ domain-containing protein 4 (Pdzd4) from Mus musculus (Mouse).